We begin with the raw amino-acid sequence, 126 residues long: Glycine cleavage system H protein (126 aa).

Positions 21–103 (TVTVGISDHA…YESGWIARIK (83 aa)) constitute a Lipoyl-binding domain. Lys62 bears the N6-lipoyllysine mark.

This sequence belongs to the GcvH family. In terms of assembly, the glycine cleavage system is composed of four proteins: P, T, L and H. Requires (R)-lipoate as cofactor.

Functionally, the glycine cleavage system catalyzes the degradation of glycine. The H protein shuttles the methylamine group of glycine from the P protein to the T protein. This Aliivibrio fischeri (strain ATCC 700601 / ES114) (Vibrio fischeri) protein is Glycine cleavage system H protein.